The primary structure comprises 395 residues: Probable sugar efflux transporter (395 aa).

The next 12 membrane-spanning stretches (helical) occupy residues 13-33 (VVSL…PVAL), 48-68 (VGLI…PCML), 82-102 (IFIL…YWVL), 107-127 (IGVA…VVRL), 134-154 (AQAL…GLPL), 168-188 (FVLI…LLPV), 207-227 (PALL…FTAY), 244-264 (FTTI…MLFS), 272-292 (AGFL…LLPL), 297-317 (WSLS…SLGM), 331-351 (VAMA…ALLG), and 363-383 (IGYM…FTFV).

It belongs to the major facilitator superfamily. SotB (TC 2.A.1.2) family.

Its subcellular location is the cell inner membrane. Its function is as follows. Involved in the efflux of sugars. The physiological role may be the reduction of the intracellular concentration of toxic sugars or sugar metabolites. This chain is Probable sugar efflux transporter, found in Pectobacterium atrosepticum (strain SCRI 1043 / ATCC BAA-672) (Erwinia carotovora subsp. atroseptica).